A 467-amino-acid chain; its full sequence is 3-isopropylmalate dehydratase large subunit (467 aa).

Residues Cys-349, Cys-409, and Cys-412 each coordinate [4Fe-4S] cluster.

This sequence belongs to the aconitase/IPM isomerase family. LeuC type 1 subfamily. Heterodimer of LeuC and LeuD. It depends on [4Fe-4S] cluster as a cofactor.

The enzyme catalyses (2R,3S)-3-isopropylmalate = (2S)-2-isopropylmalate. It functions in the pathway amino-acid biosynthesis; L-leucine biosynthesis; L-leucine from 3-methyl-2-oxobutanoate: step 2/4. Its function is as follows. Catalyzes the isomerization between 2-isopropylmalate and 3-isopropylmalate, via the formation of 2-isopropylmaleate. The chain is 3-isopropylmalate dehydratase large subunit from Vibrio cholerae serotype O1 (strain ATCC 39541 / Classical Ogawa 395 / O395).